The primary structure comprises 77 residues: MNKQQNNLQDIFLNSARKNKMPVTIYLSTGFQINGTVKGFDSFTVILDSEGKQMLIYKHAITTVTPEKPILFVDNES.

Residues aspartate 10 to isoleucine 70 form the Sm domain.

The protein belongs to the Hfq family. In terms of assembly, homohexamer.

In terms of biological role, RNA chaperone that binds small regulatory RNA (sRNAs) and mRNAs to facilitate mRNA translational regulation in response to envelope stress, environmental stress and changes in metabolite concentrations. Also binds with high specificity to tRNAs. In Clostridium botulinum (strain Eklund 17B / Type B), this protein is RNA-binding protein Hfq.